Here is a 65-residue protein sequence, read N- to C-terminus: Protein translocase subunit SecE (65 aa).

The Cytoplasmic segment spans residues 1 to 27 (MEKLKEFLKGVRDELKRVVWPSRELVV). Residues 28–59 (KATISVIIFSLAIGVYLWILDLTFTKIISFIL) form a helical membrane-spanning segment. Residues 60–65 (SLRGSL) are Periplasmic-facing.

This sequence belongs to the SecE/SEC61-gamma family. As to quaternary structure, component of the Sec protein translocase complex. Heterotrimer consisting of SecY, SecE and SecG subunits. The heterotrimers can form oligomers, although 1 heterotrimer is thought to be able to translocate proteins. Interacts with SecDF, and other proteins may be involved. The channel interacts with SecA via subunit SecY.

The protein resides in the cell inner membrane. Its function is as follows. Essential subunit of the protein translocation channel SecYEG. Clamps together the 2 halves of SecY. May contact the channel plug during translocation. In Aquifex aeolicus (strain VF5), this protein is Protein translocase subunit SecE.